The chain runs to 417 residues: Type IV inositol polyphosphate 5-phosphatase 9 (417 aa).

2 catalytic regions span residues 258–273 (DRVI…ISLP) and 339–354 (KKRA…WYGN).

The protein belongs to the inositol polyphosphate 5-phosphatase family. In terms of tissue distribution, specifically expressed in roots.

It carries out the reaction a 1,2-diacyl-sn-glycero-3-phospho-(1D-myo-inositol-4,5-bisphosphate) + H2O = a 1,2-diacyl-sn-glycero-3-phospho-(1D-myo-inositol 4-phosphate) + phosphate. It catalyses the reaction a 1,2-diacyl-sn-glycero-3-phospho-(1D-myo-inositol-3,4,5-trisphosphate) + H2O = a 1,2-diacyl-sn-glycero-3-phospho-(1D-myo-inositol-3,4-bisphosphate) + phosphate. In terms of biological role, has phosphatase activity toward PtdIns(4,5)P2 and at a lower extent toward PtdIns(3,4,5)P3 but not toward Ins(1,4,5)P3. Functions in salt stress response by regulating reactive oxygen species (ROS) production, endocytosis, Ca(2+) influx and stress-responsive genes expression. The polypeptide is Type IV inositol polyphosphate 5-phosphatase 9 (Arabidopsis thaliana (Mouse-ear cress)).